Consider the following 209-residue polypeptide: Large ribosomal subunit protein uL4 (209 aa).

Residues 46–76 (RGTASTKTRGEVSGGGRKPWRQKGTGRARHG) form a disordered region. The segment covering 63–76 (KPWRQKGTGRARHG) has biased composition (basic residues).

Belongs to the universal ribosomal protein uL4 family. As to quaternary structure, part of the 50S ribosomal subunit.

Functionally, one of the primary rRNA binding proteins, this protein initially binds near the 5'-end of the 23S rRNA. It is important during the early stages of 50S assembly. It makes multiple contacts with different domains of the 23S rRNA in the assembled 50S subunit and ribosome. Its function is as follows. Forms part of the polypeptide exit tunnel. This Halothermothrix orenii (strain H 168 / OCM 544 / DSM 9562) protein is Large ribosomal subunit protein uL4.